A 700-amino-acid chain; its full sequence is Methionine--tRNA ligase (700 aa).

A 'HIGH' region motif is present at residues 14 to 24; sequence PYANGPVHLGH. Zn(2+) is bound by residues C146, C149, C159, and C162. The short motif at 343–347 is the 'KMSKS' region element; sequence KFSKS. Residue K346 participates in ATP binding. The 102-residue stretch at 599-700 folds into the tRNA-binding domain; sequence EFEKIDLRVA…GDSIVGKPVK (102 aa).

The protein belongs to the class-I aminoacyl-tRNA synthetase family. MetG type 1 subfamily. In terms of assembly, homodimer. Zn(2+) serves as cofactor.

The protein resides in the cytoplasm. It catalyses the reaction tRNA(Met) + L-methionine + ATP = L-methionyl-tRNA(Met) + AMP + diphosphate. In terms of biological role, is required not only for elongation of protein synthesis but also for the initiation of all mRNA translation through initiator tRNA(fMet) aminoacylation. This Chloroherpeton thalassium (strain ATCC 35110 / GB-78) protein is Methionine--tRNA ligase.